Here is a 422-residue protein sequence, read N- to C-terminus: Alcohol dehydrogenase 4 (422 aa).

Residues 1–29 constitute a mitochondrion transit peptide; it reads MSILRSPFRLIRSPARFFPSLFHSSCNQS. D82, N114, G141, S142, T181, T182, T190, F192, K203, and G225 together coordinate NAD(+). D237, H241, and H306 together coordinate Fe(2+). 2 residues coordinate NAD(+): H310 and H320. Position 320 (H320) interacts with Fe(2+).

The protein belongs to the iron-containing alcohol dehydrogenase family. Requires Zn(2+) as cofactor.

The protein localises to the mitochondrion matrix. It carries out the reaction a primary alcohol + NAD(+) = an aldehyde + NADH + H(+). It catalyses the reaction a secondary alcohol + NAD(+) = a ketone + NADH + H(+). The catalysed reaction is ethanol + NAD(+) = acetaldehyde + NADH + H(+). Its function is as follows. Involved in ethanol oxidation in mitochondria. The protein is Alcohol dehydrogenase 4 (adh4) of Schizosaccharomyces pombe (strain 972 / ATCC 24843) (Fission yeast).